A 280-amino-acid polypeptide reads, in one-letter code: DegV domain-containing protein M6_Spy1440 (280 aa).

The DegV domain occupies 3–280 (WKIVTDSGCD…DGGLLMGYEI (278 aa)). Serine 63 and serine 91 together coordinate hexadecanoate.

May bind long-chain fatty acids, such as palmitate, and may play a role in lipid transport or fatty acid metabolism. The chain is DegV domain-containing protein M6_Spy1440 from Streptococcus pyogenes serotype M6 (strain ATCC BAA-946 / MGAS10394).